The sequence spans 177 residues: ATP synthase subunit b (177 aa).

A helical transmembrane segment spans residues 35 to 55 (FFVVLAIFLIVLAVIGTFVVP).

This sequence belongs to the ATPase B chain family. As to quaternary structure, F-type ATPases have 2 components, F(1) - the catalytic core - and F(0) - the membrane proton channel. F(1) has five subunits: alpha(3), beta(3), gamma(1), delta(1), epsilon(1). F(0) has three main subunits: a(1), b(2) and c(10-14). The alpha and beta chains form an alternating ring which encloses part of the gamma chain. F(1) is attached to F(0) by a central stalk formed by the gamma and epsilon chains, while a peripheral stalk is formed by the delta and b chains.

The protein localises to the cell membrane. Its function is as follows. F(1)F(0) ATP synthase produces ATP from ADP in the presence of a proton or sodium gradient. F-type ATPases consist of two structural domains, F(1) containing the extramembraneous catalytic core and F(0) containing the membrane proton channel, linked together by a central stalk and a peripheral stalk. During catalysis, ATP synthesis in the catalytic domain of F(1) is coupled via a rotary mechanism of the central stalk subunits to proton translocation. In terms of biological role, component of the F(0) channel, it forms part of the peripheral stalk, linking F(1) to F(0). This is ATP synthase subunit b from Mycobacteroides abscessus (strain ATCC 19977 / DSM 44196 / CCUG 20993 / CIP 104536 / JCM 13569 / NCTC 13031 / TMC 1543 / L948) (Mycobacterium abscessus).